The chain runs to 173 residues: Photosystem I assembly protein Ycf3 (173 aa).

3 TPR repeats span residues 35 to 68 (AFAY…EDDP), 72 to 105 (SYIL…NPRM), and 120 to 153 (GEKA…APNN).

The protein belongs to the Ycf3 family.

It is found in the cellular thylakoid membrane. Essential for the assembly of the photosystem I (PSI) complex. May act as a chaperone-like factor to guide the assembly of the PSI subunits. This chain is Photosystem I assembly protein Ycf3, found in Picosynechococcus sp. (strain ATCC 27264 / PCC 7002 / PR-6) (Agmenellum quadruplicatum).